We begin with the raw amino-acid sequence, 1053 residues long: Middle cell wall protein (1053 aa).

The first 23 residues, 1-23 (MKKVVNSVLASALALTVAPMAFA), serve as a signal peptide directing secretion. SLH domains lie at 26–89 (EAAT…KLAQ), 90–153 (FSNT…KGVW), and 154–203 (PNSM…FGTD).

In terms of assembly, the middle cell wall layer is composed of subunits of the middle cell wall protein. These proteins form a hexagonal array with a lattice constant of 14.5 nM in the middle cell wall layers.

It is found in the secreted. The protein localises to the cell wall. Its subcellular location is the S-layer. Its function is as follows. The middle wall protein binds to peptidoglycan and to the outer cell wall protein. The protein is Middle cell wall protein of Brevibacillus brevis (strain 47 / JCM 6285 / NBRC 100599).